A 285-amino-acid chain; its full sequence is V-type proton ATPase subunit D (285 aa).

A compositionally biased stretch (basic and acidic residues) spans 208-226 (QKTKENAEKADSVTKEEHQ). Positions 208–285 (QKTKENAEKA…ENDSDEEVIF (78 aa)) are disordered. Ser-219 is subject to Phosphoserine. The span at 227–236 (GGSNTLQQTK) shows a compositional bias: polar residues. The span at 248–263 (VGKEVINEVENSKDDT) shows a compositional bias: basic and acidic residues. Residues 271-285 (TDDEEENDSDEEVIF) show a composition bias toward acidic residues.

Belongs to the V-ATPase D subunit family. In terms of assembly, V-ATPase is a heteromultimeric enzyme composed of a peripheral catalytic V1 complex (components A to H) attached to an integral membrane V0 proton pore complex (components: a, c, c', c'', d, e, f and VOA1).

The protein resides in the vacuole membrane. Subunit of the V1 complex of vacuolar(H+)-ATPase (V-ATPase), a multisubunit enzyme composed of a peripheral complex (V1) that hydrolyzes ATP and a membrane integral complex (V0) that translocates protons. V-ATPase is responsible for acidifying and maintaining the pH of intracellular compartments. The polypeptide is V-type proton ATPase subunit D (vma8) (Schizosaccharomyces pombe (strain 972 / ATCC 24843) (Fission yeast)).